The following is a 288-amino-acid chain: Energy-coupling factor transporter ATP-binding protein EcfA2 (288 aa).

The region spanning 3 to 246 is the ABC transporter domain; it reads IKLEQLGYCY…PDELVDLGLS (244 aa). 40-47 is an ATP binding site; the sequence is GHTGSGKS.

The protein belongs to the ABC transporter superfamily. Energy-coupling factor EcfA family. In terms of assembly, forms a stable energy-coupling factor (ECF) transporter complex composed of 2 membrane-embedded substrate-binding proteins (S component), 2 ATP-binding proteins (A component) and 2 transmembrane proteins (T component).

The protein localises to the cell membrane. In terms of biological role, ATP-binding (A) component of a common energy-coupling factor (ECF) ABC-transporter complex. Unlike classic ABC transporters this ECF transporter provides the energy necessary to transport a number of different substrates. The chain is Energy-coupling factor transporter ATP-binding protein EcfA2 from Listeria monocytogenes serotype 4b (strain F2365).